An 88-amino-acid chain; its full sequence is Large ribosomal subunit protein bL27 (88 aa).

The segment at 1–24 is disordered; it reads MAHKKGTGSTRNGRDSNSKRLGVK.

This sequence belongs to the bacterial ribosomal protein bL27 family.

The polypeptide is Large ribosomal subunit protein bL27 (Prochlorococcus marinus (strain MIT 9303)).